The sequence spans 238 residues: Probable transcriptional regulatory protein HH_1604 (238 aa).

This sequence belongs to the TACO1 family.

Its subcellular location is the cytoplasm. The sequence is that of Probable transcriptional regulatory protein HH_1604 from Helicobacter hepaticus (strain ATCC 51449 / 3B1).